The primary structure comprises 339 residues: Serpentine receptor class r-10 (339 aa).

The Extracellular portion of the chain corresponds to 1–11 (MSGELWITLVD). The helical transmembrane segment at 12 to 32 (TADIVGVTLTFCVNIVLLGLL) threads the bilayer. The Cytoplasmic portion of the chain corresponds to 33-42 (KTRGKNLGTY). The chain crosses the membrane as a helical span at residues 43–63 (KYLMAFFSVFSIFYAIIEFIL). Topologically, residues 64–92 (RPIMHIENTTFFLISRKRFNYSTKLGKIN) are extracellular. N-linked (GlcNAc...) asparagine glycosylation is found at N71 and N83. A helical transmembrane segment spans residues 93-113 (SAFYCACFATSFVVSGVHFVY). Residues 114–131 (RYFATCKPNLLRLFNLPT) lie on the Cytoplasmic side of the membrane. The helical transmembrane segment at 132 to 152 (LLLWPLGCSVPVTMWASVSYF) threads the bilayer. Over 153-201 (LYPDTEYTEAAVTNVLNNHYNWIKKENVSYIAYVYYQYENGVRHIYLKN) the chain is Extracellular. N179 is a glycosylation site (N-linked (GlcNAc...) asparagine). A helical membrane pass occupies residues 202-222 (LLGCFVHYFVMSMTFVVMFYC). Residues 223-254 (GYATWKTMNEHKDVSDRTRALQKQLFKALVLQ) are Cytoplasmic-facing. A helical membrane pass occupies residues 255 to 275 (TLIPTIFMYAPTGVMFIAPFF). The Extracellular segment spans residues 276–284 (DVNLNANAN). Residues 285 to 305 (FIVFCSFLYPGLDPLILILII) traverse the membrane as a helical segment. The Cytoplasmic segment spans residues 306–339 (RDFRRTIFNFLCGKKNSVDESRSTTRANLSQVPT).

This sequence belongs to the nematode receptor-like protein str family. As to quaternary structure, interacts with odr-4. In terms of tissue distribution, strongly expressed in the sensory cilia of AWA olfactory neurons, and at low levels in the CEP neurons.

The protein localises to the cell projection. It localises to the cilium membrane. Functionally, an odorant receptor which affects chemotaxis to the volatile odorant diacetyl. Specifies AWA neuronal cell fate via the odr-7 pathway. This is Serpentine receptor class r-10 from Caenorhabditis elegans.